A 292-amino-acid polypeptide reads, in one-letter code: 4-diphosphocytidyl-2-C-methyl-D-erythritol kinase (292 aa).

Lysine 11 is a catalytic residue. 95-105 provides a ligand contact to ATP; it reads PVSAGLAGGSS. Aspartate 137 is a catalytic residue.

The protein belongs to the GHMP kinase family. IspE subfamily.

It carries out the reaction 4-CDP-2-C-methyl-D-erythritol + ATP = 4-CDP-2-C-methyl-D-erythritol 2-phosphate + ADP + H(+). It participates in isoprenoid biosynthesis; isopentenyl diphosphate biosynthesis via DXP pathway; isopentenyl diphosphate from 1-deoxy-D-xylulose 5-phosphate: step 3/6. Its function is as follows. Catalyzes the phosphorylation of the position 2 hydroxy group of 4-diphosphocytidyl-2C-methyl-D-erythritol. The polypeptide is 4-diphosphocytidyl-2-C-methyl-D-erythritol kinase (Alkaliphilus oremlandii (strain OhILAs) (Clostridium oremlandii (strain OhILAs))).